A 119-amino-acid polypeptide reads, in one-letter code: Small ribosomal subunit protein uS13 (119 aa).

Positions 90 to 119 are disordered; sequence IRHRRGLPLRGQRTRSNARTRKGKRKPIRS. A compositionally biased stretch (basic residues) spans 91 to 119; it reads RHRRGLPLRGQRTRSNARTRKGKRKPIRS.

It belongs to the universal ribosomal protein uS13 family. As to quaternary structure, part of the 30S ribosomal subunit. Forms a loose heterodimer with protein S19. Forms two bridges to the 50S subunit in the 70S ribosome.

Its function is as follows. Located at the top of the head of the 30S subunit, it contacts several helices of the 16S rRNA. In the 70S ribosome it contacts the 23S rRNA (bridge B1a) and protein L5 of the 50S subunit (bridge B1b), connecting the 2 subunits; these bridges are implicated in subunit movement. Contacts the tRNAs in the A and P-sites. The sequence is that of Small ribosomal subunit protein uS13 from Coxiella burnetii (strain CbuK_Q154) (Coxiella burnetii (strain Q154)).